Consider the following 362-residue polypeptide: Dihydroorotate dehydrogenase (quinone) (362 aa).

FMN is bound by residues 62 to 66 (AGYDK) and Thr-86. Lys-66 serves as a coordination point for substrate. 111-115 (NRLGF) is a binding site for substrate. Positions 139 and 170 each coordinate FMN. Asn-170 serves as a coordination point for substrate. Ser-173 acts as the Nucleophile in catalysis. Asn-175 is a substrate binding site. Residues Lys-215 and Ser-243 each coordinate FMN. Substrate is bound at residue 244 to 245 (NT). Residues Gly-266, Gly-295, and 316 to 317 (YS) each bind FMN.

It belongs to the dihydroorotate dehydrogenase family. Type 2 subfamily. Monomer. Requires FMN as cofactor.

It is found in the cell membrane. It catalyses the reaction (S)-dihydroorotate + a quinone = orotate + a quinol. It functions in the pathway pyrimidine metabolism; UMP biosynthesis via de novo pathway; orotate from (S)-dihydroorotate (quinone route): step 1/1. Its function is as follows. Catalyzes the conversion of dihydroorotate to orotate with quinone as electron acceptor. The sequence is that of Dihydroorotate dehydrogenase (quinone) from Rhizobium etli (strain ATCC 51251 / DSM 11541 / JCM 21823 / NBRC 15573 / CFN 42).